The chain runs to 233 residues: Putative glutathione peroxidase 7, chloroplastic (233 aa).

The N-terminal 69 residues, 1-69 (MAFSYASFST…KSKNFSVYAR (69 aa)), are a transit peptide targeting the chloroplast. C108 is an active-site residue.

The protein belongs to the glutathione peroxidase family.

It is found in the plastid. It localises to the chloroplast. It carries out the reaction 2 glutathione + H2O2 = glutathione disulfide + 2 H2O. Functionally, may constitute a glutathione peroxidase-like protective system against oxidative stresses. This is Putative glutathione peroxidase 7, chloroplastic (GPX7) from Arabidopsis thaliana (Mouse-ear cress).